We begin with the raw amino-acid sequence, 419 residues long: uncharacterized protein (419 aa).

A run of 12 helical transmembrane segments spans residues 15–35 (RVLMINQFGINIGFYMLMPYL), 36–56 (ADYLAGPLGLAAWAVGLVMGV), 77–99 (YKPLIIAGCLIRTGGFALLVVAQ), 104–126 (VLIAAAATGFAGALFNPAVRGYL), 140–160 (MFNVFYQSGILLGPLVGLVLL), 166–186 (ITVLAAAGVFGLLTVAQLVAL), 213–233 (FLTLAAAMTGCYALSFQIYLA), 246–266 (QYLLIAAMFAVSGLVAVGGQL), 282–302 (LVVGATILAASFIPVAVIPNG), 309–329 (VAVMALVLSASLLAVASAALF), 351–371 (FYSTIVGVGVLVGNLAIGSLM), and 377–397 (LNTDEIVWGGLILVGIVAVAG).

The protein belongs to the major facilitator superfamily.

It localises to the cell membrane. This is an uncharacterized protein from Mycobacterium tuberculosis (strain CDC 1551 / Oshkosh).